The sequence spans 208 residues: 23 kDa protein (208 aa).

This chain is 23 kDa protein, found in Pea early browning virus.